We begin with the raw amino-acid sequence, 195 residues long: Packaging protein 2 (195 aa).

The tract at residues 1–124 is disordered; the sequence is MAPKKKLQLP…QEQQQRQGYR (124 aa). The span at 15-53 shows a compositional bias: acidic residues; it reads TDEEEYWDSQAEEVLDEEEEMMEDWDSLDEASEAEEVSD. The segment covering 54–63 has biased composition (low complexity); the sequence is ETPSPSVAFP.

The protein belongs to the adenoviridae splicing factor family. As to quaternary structure, part of a genome packaging complex composed of packaging proteins 1, 2 and 3; this complex specifically binds to the packaging sequence on the left end of viral genomic DNA and performs packaging of the viral genome. Self-assembles into higher-order structures.

The protein localises to the host nucleus. Functionally, component of the packaging machinery which encapsidates the viral DNA into preformed capsids and transcriptional activator of the viral major late promoter (MLP). Binds, along with packaging proteins 1 and 3, to the specific packaging sequence on the left end of viral genomic DNA and plays an active role in packaging of the viral genome into preformed capsids. Specifically binds to the 5'-TTTG-3' nucleotides of the repeats making up the packaging sequence. Forms a transcription factor called DEF-A through cooperative binding with packaging protein 1. DEF-A binds to downstream elements of the major late promoter (MLP) and stimulates transcription from the MLP after initiation of viral DNA replication. Simultaneously suppresses early gene expression and is thus likely to participate in the early-late switch in the expression pattern of the late viral proteins. May as well enhance transcription from IVa2 and pIX promoters. The polypeptide is Packaging protein 2 (Homo sapiens (Human)).